We begin with the raw amino-acid sequence, 355 residues long: Uroporphyrinogen decarboxylase (355 aa).

Substrate is bound by residues 27-31 (RQAGR), Asp-78, Tyr-155, Ser-210, and His-328.

This sequence belongs to the uroporphyrinogen decarboxylase family. As to quaternary structure, homodimer.

The protein localises to the cytoplasm. It carries out the reaction uroporphyrinogen III + 4 H(+) = coproporphyrinogen III + 4 CO2. The protein operates within porphyrin-containing compound metabolism; protoporphyrin-IX biosynthesis; coproporphyrinogen-III from 5-aminolevulinate: step 4/4. Functionally, catalyzes the decarboxylation of four acetate groups of uroporphyrinogen-III to yield coproporphyrinogen-III. This Pseudomonas paraeruginosa (strain DSM 24068 / PA7) (Pseudomonas aeruginosa (strain PA7)) protein is Uroporphyrinogen decarboxylase.